Consider the following 378-residue polypeptide: Acetylornithine deacetylase (378 aa).

His76 provides a ligand contact to Zn(2+). Residue Asp78 is part of the active site. Asp108 contributes to the Zn(2+) binding site. The active site involves Glu140. Positions 141, 165, and 351 each coordinate Zn(2+).

This sequence belongs to the peptidase M20A family. ArgE subfamily. Homodimer. The cofactor is Zn(2+). Co(2+) is required as a cofactor. It depends on glutathione as a cofactor.

The protein resides in the cytoplasm. The catalysed reaction is N(2)-acetyl-L-ornithine + H2O = L-ornithine + acetate. Its pathway is amino-acid biosynthesis; L-arginine biosynthesis; L-ornithine from N(2)-acetyl-L-ornithine (linear): step 1/1. Functionally, catalyzes the hydrolysis of the amide bond of N(2)-acetylated L-amino acids. Cleaves the acetyl group from N-acetyl-L-ornithine to form L-ornithine, an intermediate in L-arginine biosynthesis pathway, and a branchpoint in the synthesis of polyamines. This Aliivibrio fischeri (strain MJ11) (Vibrio fischeri) protein is Acetylornithine deacetylase.